We begin with the raw amino-acid sequence, 356 residues long: MKLTINKNSAKWMQLPRDVLVGHGVLEEVGDVCRDLKLKGNALIVTGSTTQDVAGKRVSRLLEDAGNSTETVLTCRATMEEVDKLMEKALNTEATFLLGVGSGRSIDLAKLASTRLEIPFISVPTAASHDGIASSRASVIDNGKNASIQAQAPLAVIADTEIISAAPYRFLAAGCGDIISNYTAVLDWELASRLRNEYFGEYAAALSRMAARVVIENADSIKPDHETSARLVVKALVSNGVAMSIAGSSRPASGSEHMFSHALDRIAPKAALHGEQCGVGTIMMMYLHGGNWQEIRDALKKIGAPTNAEELGIEDKYIIEALLQAHSIRPDRYTILGNGLTLSAAEKVARITKVIN.

NAD(+)-binding positions include glycine 103–aspartate 107 and threonine 125–serine 128. Substrate is bound at residue aspartate 130. An NAD(+)-binding site is contributed by serine 134. Aspartate 177 contributes to the substrate binding site. Zn(2+) is bound by residues aspartate 177 and histidine 257. Position 261 (histidine 261) interacts with substrate. Position 273 (histidine 273) interacts with Zn(2+).

This sequence belongs to the glycerol-1-phosphate dehydrogenase family. The cofactor is Zn(2+).

The protein localises to the cytoplasm. The catalysed reaction is sn-glycerol 1-phosphate + NAD(+) = dihydroxyacetone phosphate + NADH + H(+). The enzyme catalyses sn-glycerol 1-phosphate + NADP(+) = dihydroxyacetone phosphate + NADPH + H(+). Its pathway is membrane lipid metabolism; glycerophospholipid metabolism. Its function is as follows. Catalyzes the NAD(P)H-dependent reduction of dihydroxyacetonephosphate (DHAP or glycerone phosphate) to glycerol 1-phosphate (G1P). The G1P thus generated is used as the glycerophosphate backbone of phospholipids in the cellular membranes of Archaea. This Methanosarcina mazei (strain ATCC BAA-159 / DSM 3647 / Goe1 / Go1 / JCM 11833 / OCM 88) (Methanosarcina frisia) protein is Glycerol-1-phosphate dehydrogenase [NAD(P)+].